The primary structure comprises 1193 residues: K(+) efflux antiporter 1, chloroplastic (1193 aa).

A chloroplast-targeting transit peptide spans 1 to 49 (MEYASTFQRPILFHGGDGASYCFPNRLISPKGISITSGDSKVHSCFRLR). The Stromal portion of the chain corresponds to 50–585 (RNVAQSGTLN…MIPHQEVNEE (536 aa)). A disordered region spans residues 103-135 (SLGNADSNDHRIGESSESSDETEATDLKDARVE). A coiled-coil region spans residues 131-355 (DARVENDTDS…RAEKSLSISQ (225 aa)). Position 168 is an N6-acetyllysine; by NSI (Lys-168). Residues 351-364 (LSISQTPEETQGQL) are compositionally biased toward polar residues. 2 disordered regions span residues 351-372 (LSIS…TSQE) and 421-474 (QPYE…NSPK). Residues 439 to 465 (KVVEADSEKPKINVQTKKQETQKDLPK) are compositionally biased toward basic and acidic residues. A helical membrane pass occupies residues 586 to 606 (EASLFDFLWLLLASVIFVPLF). Over 607-612 (QKIPGG) the chain is Chloroplast intermembrane. Residues 613 to 633 (SPVLGYLAAGILIGPYGLSII) traverse the membrane as a helical segment. At 634–640 (RNVHGTR) the chain is on the stromal side. A helical transmembrane segment spans residues 641–661 (AIAEFGVVFLLFNIGLELSVE). Residues 662-668 (RLSSMKK) lie on the Chloroplast intermembrane side of the membrane. The helical transmembrane segment at 669–689 (YVFGLGSAQVLVTAAVVGLLA) threads the bilayer. Topologically, residues 690-698 (HYVAGQAGP) are stromal. The chain crosses the membrane as a helical span at residues 699 to 719 (AAIVIGNGLALSSTAVVLQVL). The Chloroplast intermembrane segment spans residues 720-733 (QERGESTSRHGRAS). A helical transmembrane segment spans residues 734–754 (FSVLLFQDLAVVVLLILIPLI). The Stromal portion of the chain corresponds to 755–766 (SPNSSKGGIGFQ). The chain crosses the membrane as a helical span at residues 767 to 787 (AIAEALGLAAVKAAVAITAII). Residues 788–827 (AGGRLLLRPIYKQIAENRNAEIFSANTLLVILGTSLLTAR) lie on the Chloroplast intermembrane side of the membrane. A helical transmembrane segment spans residues 828–848 (AGLSMALGAFLAGLLLAETEF). The Stromal segment spans residues 849 to 860 (SLQVESDIAPYR). Residues 861 to 881 (GLLLGLFFMTVGMSIDPKLLL) traverse the membrane as a helical segment. Residues 882 to 883 (SN) are Chloroplast intermembrane-facing. A helical transmembrane segment spans residues 884 to 904 (FPVIVGTLGLLIVGKTMLVVI). Residues 905–912 (MGKLFGIS) are Stromal-facing. The helical transmembrane segment at 913–933 (IISAIRVGLLLAPGGEFAFVA) threads the bilayer. Residues 934–948 (FGEAVNQGIMSPQLS) lie on the Chloroplast intermembrane side of the membrane. The helical transmembrane segment at 949 to 969 (SLLFLVVGISMAITPWLAAGG) threads the bilayer. Over 970-1193 (QLIASRFELH…QIIEGGTVVI (224 aa)) the chain is Stromal. The 118-residue stretch at 995 to 1112 (QGHIIICGFG…EKAGATAVVP (118 aa)) folds into the RCK N-terminal domain. Residues 1165–1184 (GYSRTSKPKPQPSDASGDNQ) form a disordered region.

Belongs to the monovalent cation:proton antiporter 2 (CPA2) transporter (TC 2.A.37) family. KEA (TC 2.A.37.1) subfamily. Acetylated at Lys-168 by the stromal acetyltransferase enzyme NSI. Expressed in shoots and roots. Mainly localized to leaf veins, hypocotyls, mesophylls and guard cells. Accumulates at high levels in small and dividing plastids (at protein level).

It localises to the plastid. It is found in the chloroplast inner membrane. The catalysed reaction is K(+)(in) + H(+)(out) = K(+)(out) + H(+)(in). Its activity is regulated as follows. Repressed by sodium ions Na(+). Functionally, electroneutral K(+)/H(+) efflux antiporter involved in chloroplastic K(+) homeostasis and osmotic adjustment, especially during plastid division and thylakoid membrane formation. Collaboratively with KEA2, adjusts alkaline stromal pH upon light to dark transitions in plastids. Together with KEA2, critical for chloroplast development, including chloroplast RNA-metabolism (e.g. rRNA maturation, polysome loading and RNA-protein interactions) and plastid gene expression (PGE), ion homeostasis, and photosynthesis. Contributes, during early seedling development, to the regulation of photosynthesis and abscisic acid- (ABA-) mediated primary root growth in a sucrose-dependent manner. Involved in the regulation of reactive oxygen and nitrogen species (ROS and RNS) metabolism. Required in roots for rapid hyperosmotic-induced Ca(2+) responses and for osmo-sensory potentiation in hyperosmotic conditions. May counteract resilience to drought and salt stress, involving photorespiratory pathway and stomata closure. In Arabidopsis thaliana (Mouse-ear cress), this protein is K(+) efflux antiporter 1, chloroplastic.